Consider the following 402-residue polypeptide: uncharacterized protein (402 aa).

The next 12 helical transmembrane spans lie at L11–Y31, L48–G68, L80–I100, F108–V125, L140–L160, W167–L187, F219–G239, V254–G274, L286–I306, G308–L328, S347–I367, and V373–L393.

This sequence belongs to the major facilitator superfamily. Bcr/CmlA family.

The protein resides in the cell membrane. This is an uncharacterized protein from Bacillus subtilis (strain 168).